The sequence spans 204 residues: MSRGALIVFEGLDKSGKTTQCMNIMESIPANTIKYLNFPQRSTVTGKMIDDYLTRKKTYNDHIVNLLFCANRWEFASFIQEQLEQGITLIVDRYAFSGVAYATAKGASMTLSKSYESGLPKPDLVIFLESGSKEINRNIGEEIYEDVEFQQKVLQEYKKMIEEGDIHWQIISSEFEEDVKKELIKNIVIEAIHTVTGPVGQLWM.

It belongs to the thymidylate kinase family. In terms of assembly, homodimer; the dimer arrangement is orthogonal and not antiparallel as in human enzyme.

The enzyme catalyses dTMP + ATP = dTDP + ADP. The protein operates within pyrimidine metabolism; dTTP biosynthesis. Its function is as follows. Poxvirus TMP kinase is able to phosphorylate dTMP, dUMP and also dGMP from any purine and pyrimidine nucleoside triphosphate. The large substrate specificity is explained by the presence of a canal connecting the edge of the dimer interface to the TMP base binding pocket, canal not found in the human homolog. The sequence is that of Thymidylate kinase (OPG178) from Cynomys gunnisoni (Gunnison's prairie dog).